We begin with the raw amino-acid sequence, 651 residues long: p-hydroxybenzoic acid efflux pump subunit AaeB (651 aa).

11 helical membrane-spanning segments follow: residues 11–31 (FAFKLSFAIVAALFLGFHLQL), 41–61 (AAIVSAGPAFAAGGEPFSGAI), 67–87 (LRIIGTFIGCIGGLVIIVLTI), 91–111 (VLTLMLCCLWAGICTWISSLV), 119–139 (FGLAGYTALIIIVTTGETPLL), 150–170 (EIVLGIVCAVMADLLFSPRSI), 368–388 (LFWLWTGWTSGAGCMVMIAVV), 405–425 (FLVGVIIALPIGALYFMFIIP), 429–449 (QSMLLLCISLGVLAFIIGIEV), 455–475 (GSLGTLASTINIIVLSNPMIF), and 481–501 (LDSALGQIVGCFVSLIVLLLI).

It belongs to the aromatic acid exporter ArAE (TC 2.A.85) family.

The protein localises to the cell inner membrane. Functionally, forms an efflux pump with AaeA. Could function as a metabolic relief valve, allowing to eliminate certain compounds when they accumulate to high levels in the cell. The sequence is that of p-hydroxybenzoic acid efflux pump subunit AaeB from Yersinia pseudotuberculosis serotype O:1b (strain IP 31758).